Consider the following 348-residue polypeptide: Probable dual-specificity RNA methyltransferase RlmN (348 aa).

Glutamate 89 acts as the Proton acceptor in catalysis. The 236-residue stretch at 95 to 330 (ERDHYTLCVS…NFVRFSKGVE (236 aa)) folds into the Radical SAM core domain. A disulfide bridge links cysteine 102 with cysteine 335. Cysteine 109, cysteine 113, and cysteine 116 together coordinate [4Fe-4S] cluster. S-adenosyl-L-methionine-binding positions include 157 to 158 (GE), serine 189, 214 to 216 (SLN), and asparagine 292. Cysteine 335 serves as the catalytic S-methylcysteine intermediate.

This sequence belongs to the radical SAM superfamily. RlmN family. It depends on [4Fe-4S] cluster as a cofactor.

It is found in the cytoplasm. The catalysed reaction is adenosine(2503) in 23S rRNA + 2 reduced [2Fe-2S]-[ferredoxin] + 2 S-adenosyl-L-methionine = 2-methyladenosine(2503) in 23S rRNA + 5'-deoxyadenosine + L-methionine + 2 oxidized [2Fe-2S]-[ferredoxin] + S-adenosyl-L-homocysteine. It carries out the reaction adenosine(37) in tRNA + 2 reduced [2Fe-2S]-[ferredoxin] + 2 S-adenosyl-L-methionine = 2-methyladenosine(37) in tRNA + 5'-deoxyadenosine + L-methionine + 2 oxidized [2Fe-2S]-[ferredoxin] + S-adenosyl-L-homocysteine. In terms of biological role, specifically methylates position 2 of adenine 2503 in 23S rRNA and position 2 of adenine 37 in tRNAs. The chain is Probable dual-specificity RNA methyltransferase RlmN from Aquifex aeolicus (strain VF5).